The primary structure comprises 198 residues: SOSS complex subunit B2 (198 aa).

The segment at residues 26-89 is a DNA-binding region (OB); that stretch reads IVLEIGRVTK…SMWKGCLTLY (64 aa). Positions 114–198 are disordered; sequence EPNPDYRGQQ…ARDPRRAFKR (85 aa). Composition is skewed to polar residues over residues 136 to 151 and 173 to 188; these read STNTFGPVGNGDQTGP and LPGTPSSQTVRTTISN.

This sequence belongs to the SOSS-B family. SOSS-B2 subfamily. Component of the SOSS complex, composed of SOSS-B (SOSS-B1/NABP2 or SOSS-B2/NABP1), SOSS-A/INTS3 and SOSS-C/INIP. SOSS complexes containing SOSS-B1/NABP2 are more abundant than complexes containing SOSS-B2/NABP1. In terms of tissue distribution, ubiquitous with high expression in the thymus.

The protein resides in the nucleus. In terms of biological role, component of the SOSS complex, a multiprotein complex that functions downstream of the MRN complex to promote DNA repair and G2/M checkpoint. In the SOSS complex, acts as a sensor of single-stranded DNA that binds to single-stranded DNA, in particular to polypyrimidines. The SOSS complex associates with DNA lesions and influences diverse endpoints in the cellular DNA damage response including cell-cycle checkpoint activation, recombinational repair and maintenance of genomic stability. Required for efficient homologous recombination-dependent repair of double-strand breaks (DSBs) and ATM-dependent signaling pathways. In Mus musculus (Mouse), this protein is SOSS complex subunit B2 (Nabp1).